We begin with the raw amino-acid sequence, 179 residues long: Putative mediator of RNA polymerase II transcription subunit 28 (179 aa).

A coiled-coil region spans residues 81-119; sequence SAEKNKIQLKQEIYKVKKEIENKDRLIERYKNKVKEWKY.

It belongs to the Mediator complex subunit 28 family. In terms of assembly, component of the Mediator complex.

The protein localises to the nucleus. Component of the Mediator complex, a coactivator involved in the regulated transcription of nearly all RNA polymerase II-dependent genes. Mediator functions as a bridge to convey information from gene-specific regulatory proteins to the basal RNA polymerase II transcription machinery. Mediator is recruited to promoters by direct interactions with regulatory proteins and serves as a scaffold for the assembly of a functional preinitiation complex with RNA polymerase II and the general transcription factors. The sequence is that of Putative mediator of RNA polymerase II transcription subunit 28 (med28) from Dictyostelium discoideum (Social amoeba).